Here is a 278-residue protein sequence, read N- to C-terminus: UPF0761 membrane protein NT05HA_1801 (278 aa).

The next 6 membrane-spanning stretches (helical) occupy residues 32-52, 88-108, 123-143, 168-188, 203-223, and 232-252; these read MLAI…FPVF, QMSA…INSI, PIFT…LLVG, LLSF…YMVV, LIAA…IVTF, and AMAT…FVLL.

It belongs to the UPF0761 family.

The protein localises to the cell inner membrane. This is UPF0761 membrane protein NT05HA_1801 from Aggregatibacter aphrophilus (strain NJ8700) (Haemophilus aphrophilus).